A 156-amino-acid chain; its full sequence is MPRRRVIGQRKILPDPKFGSELLAKFVNILMVDGKKSTAEAIVYTALETLAQRSGKDHLEAFEVALDNVRPTVEVKSRRVGGSTYQVPVEVRPVRRNALAMRWIVEAARKRGDKSMALRLANELSDAAENKGTAVKKREDVHRMAEANKAFAHYRW.

This sequence belongs to the universal ribosomal protein uS7 family. Part of the 30S ribosomal subunit. Contacts proteins S9 and S11.

Functionally, one of the primary rRNA binding proteins, it binds directly to 16S rRNA where it nucleates assembly of the head domain of the 30S subunit. Is located at the subunit interface close to the decoding center, probably blocks exit of the E-site tRNA. The protein is Small ribosomal subunit protein uS7 of Pectobacterium carotovorum subsp. carotovorum (strain PC1).